The sequence spans 190 residues: Probable RNA-binding protein 18 (190 aa).

One can recognise an RRM domain in the interval 25–106 (HRLWIGNLDP…KKLVVRWAHA (82 aa)). The interval 166–190 (VYSYFKPPDKKRTTPYSRTAWKSRR) is disordered.

The sequence is that of Probable RNA-binding protein 18 (RBM18) from Pongo abelii (Sumatran orangutan).